A 909-amino-acid chain; its full sequence is Protein translocase subunit SecA (909 aa).

ATP-binding positions include Q87, 105–109 (GEGKT), and D514. The interval 879–909 (TPVQGGPKVGRNDPCPCGSGKKYKHCHGKLS) is disordered. Residues C893, C895, C904, and H905 each coordinate Zn(2+). Residues 899-909 (KKYKHCHGKLS) are compositionally biased toward basic residues.

Belongs to the SecA family. As to quaternary structure, monomer and homodimer. Part of the essential Sec protein translocation apparatus which comprises SecA, SecYEG and auxiliary proteins SecDF-YajC and YidC. The cofactor is Zn(2+).

Its subcellular location is the cell inner membrane. The protein localises to the cytoplasm. The catalysed reaction is ATP + H2O + cellular proteinSide 1 = ADP + phosphate + cellular proteinSide 2.. Functionally, part of the Sec protein translocase complex. Interacts with the SecYEG preprotein conducting channel. Has a central role in coupling the hydrolysis of ATP to the transfer of proteins into and across the cell membrane, serving both as a receptor for the preprotein-SecB complex and as an ATP-driven molecular motor driving the stepwise translocation of polypeptide chains across the membrane. This chain is Protein translocase subunit SecA, found in Azoarcus sp. (strain BH72).